The chain runs to 484 residues: MEFRGSGATAVEQHLLQSETPGKNGLQATSSDQVGRTLRWFTTVVLNAAFLGMGVSAAVLGPTFPDLARNVNRNISSLSEIFVGRALGYLGGSVVGGVLFDCMNHFLLLGLSHLLTAAGLYLTPFCKTAALLTAMMSITGVSFGVLDTGGNVLILDLWGDKGAPHIQALHFSFALGAFLAPLLAKLAWGTTASAQNHTEPQLDRSALNRSFEAASDSVLAVPDDMNLLWAYASIGTYVLVLSVFLFAPFFKKRSKQKKSAASAQGARRAKYHRALLCLLFLFFFFYVGAEVTYGSYVFSFATTHVGMEESEAAGLNSIFWGTFAACRGLAIFFATLLQPGTMMVLCNIGSLASSFFLVLFDKSPLCLWIASSVYGASMAATFPSGISWIEQYTTLTGKSAAFILVGAALGLMATPALSGILQGHYPDLPVILYMCLGSAVLTTVLFPVMYKVATLPLDRKQEKSINSEGQKILLSSSRLIKEAK.

Ser6 carries the phosphoserine modification. 12 helical membrane-spanning segments follow: residues 40-60 (WFTT…AAVL), 80-100 (EIFV…GVLF), 106-126 (FLLL…TPFC), 135-155 (MMSI…VLIL), 168-188 (ALHF…KLAW), 227-247 (LLWA…FLFA), 274-294 (ALLC…VTYG), 317-337 (SIFW…ATLL), 340-360 (GTMM…LVLF), 366-386 (CLWI…PSGI), 401-421 (AFIL…SGIL), and 428-448 (LPVI…LFPV).

The protein belongs to the major facilitator superfamily. Expressed in brain, liver, lung, and kidney. In kidney expressed in cortex and inner medulla, in ascending thin limbs (ATLs) and lower descending thin limbs (DTLs). Primarily expressed in the proximal tubules of the kidney.

It is found in the apical cell membrane. Its function is as follows. May function as a sodium-dependent glucose transporter. Potential channels for urea in the inner medulla of kidney. The polypeptide is Sodium-dependent glucose transporter 1 (Rattus norvegicus (Rat)).